A 600-amino-acid chain; its full sequence is Probable translation initiation factor IF-2 (600 aa).

Residues 10-227 form the tr-type G domain; that stretch reads LRQPIVVVLG…LLAGLTQRYL (218 aa). The segment at 19–26 is G1; sequence GHVDHGKT. Position 19 to 26 (19 to 26) interacts with GTP; sequence GHVDHGKT. Residues 44 to 48 form a G2 region; the sequence is EMTQE. Residues 83–86 are G3; it reads DTPG. Residues 83–87 and 137–140 each bind GTP; these read DTPGH and NKID. The segment at 137–140 is G4; sequence NKID. The interval 205 to 207 is G5; the sequence is SAK.

Belongs to the TRAFAC class translation factor GTPase superfamily. Classic translation factor GTPase family. IF-2 subfamily.

In terms of biological role, function in general translation initiation by promoting the binding of the formylmethionine-tRNA to ribosomes. Seems to function along with eIF-2. This chain is Probable translation initiation factor IF-2, found in Saccharolobus solfataricus (strain ATCC 35092 / DSM 1617 / JCM 11322 / P2) (Sulfolobus solfataricus).